A 207-amino-acid chain; its full sequence is uncharacterized protein (207 aa).

Catalysis depends on residues arginine 80, glutamate 88, and arginine 148.

It belongs to the thermonuclease family.

This is an uncharacterized protein from Methanocaldococcus jannaschii (strain ATCC 43067 / DSM 2661 / JAL-1 / JCM 10045 / NBRC 100440) (Methanococcus jannaschii).